A 228-amino-acid chain; its full sequence is Heptaprenylglyceryl phosphate synthase (228 aa).

Lys12 is a binding site for sn-glycerol 1-phosphate. The Mg(2+) site is built by Asp14 and Thr40. Sn-glycerol 1-phosphate is bound by residues 159–164 (YLEYSG), Gly189, and 209–210 (GN).

This sequence belongs to the GGGP/HepGP synthase family. Group I subfamily. In terms of assembly, homodimer. It depends on Mg(2+) as a cofactor.

It catalyses the reaction sn-glycerol 1-phosphate + all-trans-heptaprenyl diphosphate = 3-heptaprenyl-sn-glycero-1-phosphate + diphosphate. The protein operates within membrane lipid metabolism; glycerophospholipid metabolism. Prenyltransferase that catalyzes in vivo the transfer of the heptaprenyl moiety of heptaprenyl pyrophosphate (HepPP; 35 carbon atoms) to the C3 hydroxyl of sn-glycerol-1-phosphate (G1P), producing heptaprenylglyceryl phosphate (HepGP). This reaction is an ether-bond-formation step in the biosynthesis of archaea-type G1P-based membrane lipids found in Bacillales. The sequence is that of Heptaprenylglyceryl phosphate synthase from Geobacillus sp. (strain WCH70).